Consider the following 500-residue polypeptide: Cytochrome P450 71B35 (500 aa).

A helical membrane pass occupies residues 1-21 (MAHIWLLPLIFLVCILLAVFN). C439 is a heme binding site.

This sequence belongs to the cytochrome P450 family. It depends on heme as a cofactor.

The protein localises to the membrane. The chain is Cytochrome P450 71B35 (CYP71B35) from Arabidopsis thaliana (Mouse-ear cress).